The following is a 122-amino-acid chain: uncharacterized protein (122 aa).

2 consecutive transmembrane segments (helical) span residues 14-34 (WLWI…FNNV) and 83-103 (IIGV…YFII).

Its subcellular location is the cell membrane. This is an uncharacterized protein from Ureaplasma parvum serovar 3 (strain ATCC 700970).